Reading from the N-terminus, the 197-residue chain is Peptidyl-tRNA hydrolase (197 aa).

Tyrosine 23 provides a ligand contact to tRNA. The active-site Proton acceptor is the histidine 28. The tRNA site is built by phenylalanine 73, asparagine 75, and asparagine 121.

Belongs to the PTH family. Monomer.

Its subcellular location is the cytoplasm. The catalysed reaction is an N-acyl-L-alpha-aminoacyl-tRNA + H2O = an N-acyl-L-amino acid + a tRNA + H(+). Functionally, hydrolyzes ribosome-free peptidyl-tRNAs (with 1 or more amino acids incorporated), which drop off the ribosome during protein synthesis, or as a result of ribosome stalling. Its function is as follows. Catalyzes the release of premature peptidyl moieties from peptidyl-tRNA molecules trapped in stalled 50S ribosomal subunits, and thus maintains levels of free tRNAs and 50S ribosomes. The polypeptide is Peptidyl-tRNA hydrolase (Frankia alni (strain DSM 45986 / CECT 9034 / ACN14a)).